A 324-amino-acid chain; its full sequence is Glyoxylate/hydroxypyruvate reductase B (324 aa).

Residues R237 and E266 contribute to the active site. H285 acts as the Proton donor in catalysis.

The protein belongs to the D-isomer specific 2-hydroxyacid dehydrogenase family. GhrB subfamily. In terms of assembly, homodimer.

Its subcellular location is the cytoplasm. It catalyses the reaction glycolate + NADP(+) = glyoxylate + NADPH + H(+). The enzyme catalyses (R)-glycerate + NAD(+) = 3-hydroxypyruvate + NADH + H(+). The catalysed reaction is (R)-glycerate + NADP(+) = 3-hydroxypyruvate + NADPH + H(+). Functionally, catalyzes the NADPH-dependent reduction of glyoxylate and hydroxypyruvate into glycolate and glycerate, respectively. This Shigella sonnei (strain Ss046) protein is Glyoxylate/hydroxypyruvate reductase B.